A 481-amino-acid chain; its full sequence is uncharacterized protein (481 aa).

Residues 1-28 (MPQSNHYSHQSRSHNDRRRQQPDEKVQA) are disordered. Residues 29-87 (TVNIGQRFPLTIRRLGINGEGIGYYKHVITFVKGALPEEVVVAEVTAVHPRYLEAKIRS) enclose the TRAM domain. Glutamine 313, tyrosine 342, aspartate 363, and aspartate 411 together coordinate S-adenosyl-L-methionine. The active-site Nucleophile is cysteine 438.

Belongs to the class I-like SAM-binding methyltransferase superfamily. RNA M5U methyltransferase family.

This is an uncharacterized protein from Lactiplantibacillus plantarum (strain ATCC BAA-793 / NCIMB 8826 / WCFS1) (Lactobacillus plantarum).